The sequence spans 221 residues: Uracil-DNA glycosylase 1 (221 aa).

Asp-61 acts as the Proton acceptor in catalysis.

It belongs to the uracil-DNA glycosylase (UDG) superfamily. UNG family.

The protein resides in the cytoplasm. The enzyme catalyses Hydrolyzes single-stranded DNA or mismatched double-stranded DNA and polynucleotides, releasing free uracil.. Functionally, excises uracil residues from the DNA which can arise as a result of misincorporation of dUMP residues by DNA polymerase or due to deamination of cytosine. This chain is Uracil-DNA glycosylase 1, found in Listeria monocytogenes serovar 1/2a (strain ATCC BAA-679 / EGD-e).